A 406-amino-acid chain; its full sequence is Tryptophan synthase beta chain (406 aa).

Lys-97 bears the N6-(pyridoxal phosphate)lysine mark.

Belongs to the TrpB family. As to quaternary structure, tetramer of two alpha and two beta chains. Pyridoxal 5'-phosphate serves as cofactor.

The enzyme catalyses (1S,2R)-1-C-(indol-3-yl)glycerol 3-phosphate + L-serine = D-glyceraldehyde 3-phosphate + L-tryptophan + H2O. The protein operates within amino-acid biosynthesis; L-tryptophan biosynthesis; L-tryptophan from chorismate: step 5/5. In terms of biological role, the beta subunit is responsible for the synthesis of L-tryptophan from indole and L-serine. The sequence is that of Tryptophan synthase beta chain from Lacticaseibacillus paracasei (strain ATCC 334 / BCRC 17002 / CCUG 31169 / CIP 107868 / KCTC 3260 / NRRL B-441) (Lactobacillus paracasei).